Consider the following 542-residue polypeptide: CTP synthase (542 aa).

The interval Met-1–Ile-265 is amidoligase domain. Position 13 (Ser-13) interacts with CTP. Ser-13 contacts UTP. Ser-14–Ile-19 serves as a coordination point for ATP. Residue Tyr-54 coordinates L-glutamine. ATP is bound at residue Asp-71. Mg(2+) is bound by residues Asp-71 and Glu-139. CTP-binding positions include Asp-146–Glu-148, Lys-186–Gln-191, and Lys-222. UTP-binding positions include Lys-186–Gln-191 and Lys-222. The Glutamine amidotransferase type-1 domain maps to Thr-291–Leu-541. Residue Gly-353 coordinates L-glutamine. The active-site Nucleophile; for glutamine hydrolysis is Cys-380. Residues Phe-381–Gln-384, Glu-404, and Arg-469 each bind L-glutamine. Active-site residues include His-514 and Glu-516.

Belongs to the CTP synthase family. Homotetramer.

It carries out the reaction UTP + L-glutamine + ATP + H2O = CTP + L-glutamate + ADP + phosphate + 2 H(+). It catalyses the reaction L-glutamine + H2O = L-glutamate + NH4(+). The catalysed reaction is UTP + NH4(+) + ATP = CTP + ADP + phosphate + 2 H(+). Its pathway is pyrimidine metabolism; CTP biosynthesis via de novo pathway; CTP from UDP: step 2/2. Allosterically activated by GTP, when glutamine is the substrate; GTP has no effect on the reaction when ammonia is the substrate. The allosteric effector GTP functions by stabilizing the protein conformation that binds the tetrahedral intermediate(s) formed during glutamine hydrolysis. Inhibited by the product CTP, via allosteric rather than competitive inhibition. Catalyzes the ATP-dependent amination of UTP to CTP with either L-glutamine or ammonia as the source of nitrogen. Regulates intracellular CTP levels through interactions with the four ribonucleotide triphosphates. This Brucella melitensis biotype 1 (strain ATCC 23456 / CCUG 17765 / NCTC 10094 / 16M) protein is CTP synthase.